The primary structure comprises 560 residues: Ubiquitin carboxyl-terminal hydrolase MINDY-3 homolog (560 aa).

A compositionally biased stretch (basic and acidic residues) spans 1–13 (MNEKIVREQRGGE). Disordered stretches follow at residues 1–30 (MNEK…AASA) and 44–91 (SHKT…MLNA). 2 stretches are compositionally biased toward low complexity: residues 15 to 30 (SPSS…AASA) and 52 to 81 (TASS…SSSS). The active-site Nucleophile is the Cys139. Residues 203 to 237 (TEAGSTKKRSPAGEEESALAGQAAGSSEEVEEAAE) form a disordered region. A phosphoserine mark is found at Ser212 and Ser219. His403 functions as the Proton acceptor in the catalytic mechanism.

The protein belongs to the MINDY deubiquitinase family. FAM188 subfamily.

It catalyses the reaction Thiol-dependent hydrolysis of ester, thioester, amide, peptide and isopeptide bonds formed by the C-terminal Gly of ubiquitin (a 76-residue protein attached to proteins as an intracellular targeting signal).. Its function is as follows. Hydrolase that can remove 'Lys-48'-linked conjugated ubiquitin from proteins. The sequence is that of Ubiquitin carboxyl-terminal hydrolase MINDY-3 homolog (mindy3) from Drosophila melanogaster (Fruit fly).